A 138-amino-acid chain; its full sequence is Large-conductance mechanosensitive channel (138 aa).

Helical transmembrane passes span 15-35 (VDLA…NSVV), 38-58 (IFMP…MFIQ), and 80-100 (GNFI…FFLV).

It belongs to the MscL family. As to quaternary structure, homopentamer.

The protein localises to the cell inner membrane. Functionally, channel that opens in response to stretch forces in the membrane lipid bilayer. May participate in the regulation of osmotic pressure changes within the cell. The chain is Large-conductance mechanosensitive channel from Bartonella bacilliformis (strain ATCC 35685 / KC583 / Herrer 020/F12,63).